Consider the following 169-residue polypeptide: UPF0303 protein BCAN_A1444 (169 aa).

This sequence belongs to the UPF0303 family.

In Brucella canis (strain ATCC 23365 / NCTC 10854 / RM-666), this protein is UPF0303 protein BCAN_A1444.